Reading from the N-terminus, the 241-residue chain is ATP synthase subunit a (241 aa).

5 helical membrane-spanning segments follow: residues 30 to 50 (GQVF…VLVG), 89 to 109 (LPFI…GALI), 128 to 148 (INTT…AGLS), 193 to 213 (LAVG…VMLL), and 214 to 234 (GLFT…FYIG).

It belongs to the ATPase A chain family. In terms of assembly, F-type ATPases have 2 components, CF(1) - the catalytic core - and CF(0) - the membrane proton channel. CF(1) has five subunits: alpha(3), beta(3), gamma(1), delta(1), epsilon(1). CF(0) has four main subunits: a, b, b' and c.

It is found in the cellular thylakoid membrane. Its function is as follows. Key component of the proton channel; it plays a direct role in the translocation of protons across the membrane. The polypeptide is ATP synthase subunit a (Synechococcus sp. (strain CC9902)).